The primary structure comprises 160 residues: Small ribosomal subunit protein uS7B (160 aa).

This sequence belongs to the universal ribosomal protein uS7 family. As to quaternary structure, part of the 30S ribosomal subunit. Contacts proteins S9 and S11.

In terms of biological role, one of the primary rRNA binding proteins, it binds directly to 16S rRNA where it nucleates assembly of the head domain of the 30S subunit. Is located at the subunit interface close to the decoding center, probably blocks exit of the E-site tRNA. The polypeptide is Small ribosomal subunit protein uS7B (Aquifex aeolicus (strain VF5)).